Here is a 296-residue protein sequence, read N- to C-terminus: F-box only protein 2 (296 aa).

Positions 1-41 are disordered; the sequence is MDGDGDPESVGQPEEASPEEQPEEASAEEERPEDQQEEEAA. Acidic residues predominate over residues 16 to 40; sequence ASPEEQPEEASAEEERPEDQQEEEA. The F-box domain maps to 44-91; sequence AAYLDELPEPLLLRVLAALPAAELVQACRLVCLRWKELVDGAPLWLLK. Residues 113-296 form the FBA domain; sequence FYFLSKRRRN…VTNSSVWVEP (184 aa). Residues 210-212 and 278-279 contribute to the a carbohydrate site; these read RSD and YW.

Component of the SCF(FBXO2) complex consisting of CUL1, RBX1, SKP1 and FBXO2. Predominantly detected as heterodimer with SKP1; the heterodimer with SKP1 is not part of the SCF(FBXO2) complex.

Its subcellular location is the cytoplasm. It localises to the microsome membrane. The protein operates within protein modification; protein ubiquitination. Substrate recognition component of a SCF (SKP1-CUL1-F-box protein) E3 ubiquitin-protein ligase complex that mediates the ubiquitination and subsequent proteasomal degradation of target proteins. Involved in the endoplasmic reticulum-associated degradation pathway (ERAD) for misfolded lumenal proteins by recognizing and binding sugar chains on unfolded glycoproteins that are retrotranslocated into the cytosol and promoting their ubiquitination and subsequent degradation. Prevents formation of cytosolic aggregates of unfolded glycoproteins that have been retrotranslocated into the cytosol. Able to recognize and bind denatured glycoproteins, preferentially those of the high-mannose type. This Homo sapiens (Human) protein is F-box only protein 2 (FBXO2).